We begin with the raw amino-acid sequence, 114 residues long: Cuticle protein AMP5 (114 aa).

A Pyrrolidone carboxylic acid modification is found at glutamine 1. In terms of domain architecture, Chitin-binding type R&amp;R spans 18–83 (AGNYFYEFET…VDSPLIPVAP (66 aa)).

Arthrodial membrane.

The protein is Cuticle protein AMP5 of Homarus americanus (American lobster).